The primary structure comprises 236 residues: Protein INCA1 (236 aa).

Ser-23 carries the phosphoserine modification. The interaction with CCNA1 and CCNA1/CDK2 complex; essential for CDK2 inhibitory activity stretch occupies residues 75–99 (GLYPPEQLPPPEMLWRRKKRRPCLE). The short motif at 90–95 (RRKKRR) is the Nuclear localization signal element. At Thr-182 the chain carries Phosphothreonine. Phosphoserine occurs at positions 191 and 194.

The protein belongs to the INCA family. As to quaternary structure, interacts with CCNA1. Interacts with CCNA2, CCNB1 and CCNE1. Found in a complex with CCNA1 and CDK2. Interacts with ZNF16; the interaction inhibits INCA1 activity and induces the cell cycle process. Interacts with SPACA9. Interacts with the CCNA1/CDK2 complex. Interacts with ING5, DAZAP2, RNF26, USP15, SPOUT1, DPH7, TRIM26 and RAB5C. In terms of processing, phosphorylated when part of a complex with CCNA1 and CDK2. Strongly phosphorylated by CDK2 on its C-terminal region spanning amino acid 149-221. Less intensively phosphorylated by CDK2 on its first 75 amino acid residues. As to expression, detected in testis, and at lower levels in ovary. Detected at very low levels in testis tumors. Down-regulated in bone marrow cells in acute myeloid and lymphoid leukemia patients as compared with normal bone marrow cells.

It localises to the nucleus. The protein resides in the cytoplasm. In terms of biological role, binds to CDK2-bound cyclins and inhibits the kinase activity of CDK2; binding to cyclins is critical for its function as CDK inhibitor. Inhibits cell growth and cell proliferation and may play a role in cell cycle control. Required for ING5-mediated regulation of S-phase progression, enhancement of Fas-induced apoptosis and inhibition of cell growth. The protein is Protein INCA1 (INCA1) of Homo sapiens (Human).